We begin with the raw amino-acid sequence, 475 residues long: Aspartyl/glutamyl-tRNA(Asn/Gln) amidotransferase subunit B (475 aa).

It belongs to the GatB/GatE family. GatB subfamily. As to quaternary structure, heterotrimer of A, B and C subunits.

It carries out the reaction L-glutamyl-tRNA(Gln) + L-glutamine + ATP + H2O = L-glutaminyl-tRNA(Gln) + L-glutamate + ADP + phosphate + H(+). The catalysed reaction is L-aspartyl-tRNA(Asn) + L-glutamine + ATP + H2O = L-asparaginyl-tRNA(Asn) + L-glutamate + ADP + phosphate + 2 H(+). In terms of biological role, allows the formation of correctly charged Asn-tRNA(Asn) or Gln-tRNA(Gln) through the transamidation of misacylated Asp-tRNA(Asn) or Glu-tRNA(Gln) in organisms which lack either or both of asparaginyl-tRNA or glutaminyl-tRNA synthetases. The reaction takes place in the presence of glutamine and ATP through an activated phospho-Asp-tRNA(Asn) or phospho-Glu-tRNA(Gln). The protein is Aspartyl/glutamyl-tRNA(Asn/Gln) amidotransferase subunit B of Pelodictyon phaeoclathratiforme (strain DSM 5477 / BU-1).